A 740-amino-acid polypeptide reads, in one-letter code: Alpha-1,6-mannosylglycoprotein 6-beta-N-acetylglucosaminyltransferase A (740 aa).

Residues 1-13 lie on the Cytoplasmic side of the membrane; that stretch reads MAFFTPWKLSSQK. A helical; Signal-anchor for type II membrane protein transmembrane segment spans residues 14–30; sequence LGFFLVTFGFIWGMMLL. Over 31-740 the chain is Lumenal; it reads HFTIQQRTQP…GQVALCKDCL (710 aa). Residues N109, N114, and N117 are each glycosylated (N-linked (GlcNAc...) asparagine). 9 disulfide bridges follow: C144–C182, C155–C195, C171–C337, C371–C625, C648–C723, C652–C725, C659–C712, C680–C701, and C736–C739. The tract at residues 212-740 is sufficient for catalytic activity; it reads NSLAEIRTDF…GQVALCKDCL (529 aa). N333 carries an N-linked (GlcNAc...) asparagine glycan. 377 to 378 is a binding site for substrate; it reads DS. N432 and N446 each carry an N-linked (GlcNAc...) asparagine glycan. E525 serves as a coordination point for UDP-N-acetyl-alpha-D-glucosamine. Position 553 (K553) interacts with substrate.

The protein belongs to the glycosyltransferase 18 family. In terms of processing, N-glycosylated. A secreted form is released from the membrane after cleavage by gamma-secretase.

The protein localises to the golgi apparatus membrane. The protein resides in the secreted. It catalyses the reaction N(4)-{beta-D-GlcNAc-(1-&gt;2)-[beta-D-GlcNAc-(1-&gt;4)]-alpha-D-Man-(1-&gt;3)-[beta-D-GlcNAc-(1-&gt;2)-alpha-D-Man-(1-&gt;6)]-beta-D-Man-(1-&gt;4)-beta-D-GlcNAc-(1-&gt;4)-beta-D-GlcNAc}-L-asparaginyl-[protein] + UDP-N-acetyl-alpha-D-glucosamine = N(4)-{beta-D-GlcNAc-(1-&gt;2)-[beta-D-GlcNAc-(1-&gt;4)]-alpha-D-Man-(1-&gt;3)-[beta-D-GlcNAc-(1-&gt;2)-[beta-D-GlcNAc-(1-&gt;6)]-alpha-D-Man-(1-&gt;6)]-beta-D-Man-(1-&gt;4)-beta-D-GlcNAc-(1-&gt;4)-beta-D-GlcNAc}-L-asparaginyl-[protein] + UDP + H(+). The protein operates within protein modification; protein glycosylation. Functionally, catalyzes the addition of N-acetylglucosamine (GlcNAc) in beta 1-6 linkage to the alpha-linked mannose of biantennary N-linked oligosaccharides. Catalyzes an important step in the biosynthesis of branched, complex-type N-glycans, such as those found on EGFR, TGFR (TGF-beta receptor) and CDH2. Via its role in the biosynthesis of complex N-glycans, plays an important role in the activation of cellular signaling pathways, reorganization of the actin cytoskeleton, cell-cell adhesion and cell migration. MGAT5-dependent EGFR N-glycosylation enhances the interaction between EGFR and LGALS3 and thereby prevents rapid EGFR endocytosis and prolongs EGFR signaling. Required for efficient interaction between TGFB1 and its receptor. Enhances activation of intracellular signaling pathways by several types of growth factors, including FGF2, PDGF, IGF, TGFB1 and EGF. MGAT5-dependent CDH2 N-glycosylation inhibits CDH2-mediated homotypic cell-cell adhesion and contributes to the regulation of downstream signaling pathways. Promotes cell migration. Contributes to the regulation of the inflammatory response. MGAT5-dependent TCR N-glycosylation enhances the interaction between TCR and LGALS3, limits agonist-induced TCR clustering, and thereby dampens TCR-mediated responses to antigens. Required for normal leukocyte evasation and accumulation at sites of inflammation. Inhibits attachment of monocytes to the vascular endothelium and subsequent monocyte diapedesis. In terms of biological role, promotes proliferation of umbilical vein endothelial cells and angiogenesis, at least in part by promoting the release of the growth factor FGF2 from the extracellular matrix. The polypeptide is Alpha-1,6-mannosylglycoprotein 6-beta-N-acetylglucosaminyltransferase A (MGAT5) (Cricetulus griseus (Chinese hamster)).